The following is a 122-amino-acid chain: MIQQETRLNVADNSGAKEAQCIRVLGSSGRRYAGIGDQIVVSVKSAIPSGEINKGDVSRAVVVRTAKETRREDGTYIRFDENAAVLINQEEEPVGTRVFGPVAREVREKQFMRIVSLAPEVL.

Belongs to the universal ribosomal protein uL14 family. Part of the 50S ribosomal subunit. Forms a cluster with proteins L3 and L19. In the 70S ribosome, L14 and L19 interact and together make contacts with the 16S rRNA in bridges B5 and B8.

Its function is as follows. Binds to 23S rRNA. Forms part of two intersubunit bridges in the 70S ribosome. In Salinibacter ruber (strain DSM 13855 / M31), this protein is Large ribosomal subunit protein uL14.